We begin with the raw amino-acid sequence, 454 residues long: Septin-10 (454 aa).

Positions Gln-63–Glu-329 constitute a Septin-type G domain. The tract at residues Gly-73–Ser-80 is G1 motif. GTP-binding positions include Gly-73 to Ser-80, Gly-128, Lys-209 to Glu-217, Gly-263, and Arg-278. Positions Asn-125 to Gly-128 are G3 motif. The segment at Ala-208–Asp-211 is G4 motif.

The protein belongs to the TRAFAC class TrmE-Era-EngA-EngB-Septin-like GTPase superfamily. Septin GTPase family. In terms of assembly, septins polymerize into heterooligomeric protein complexes that form filaments, and can associate with cellular membranes, actin filaments and microtubules. GTPase activity is required for filament formation. Interacts with ADGB. Proteolytically cleaved in vitro in a calmodulin-dependent manner. In terms of tissue distribution, widely expressed. Abundantly expressed in heart and kidney, placenta, skeletal muscles, liver and lung, as well as various tumor cell lines.

It is found in the cytoplasm. Its subcellular location is the cytoskeleton. The protein resides in the cell projection. The protein localises to the cilium. It localises to the flagellum. Filament-forming cytoskeletal GTPase. May play a role in cytokinesis (Potential). In Homo sapiens (Human), this protein is Septin-10.